Reading from the N-terminus, the 499-residue chain is Probable alpha-L-arabinofuranosidase B (499 aa).

Positions 1–17 are cleaved as a signal peptide; it reads MFSRRNLLALGLAATVS. A catalytic region spans residues 18-335; it reads AGPCDIYEAG…ENIVAAKYVV (318 aa). Intrachain disulfides connect C21–C31, C81–C86, and C176–C177. N-linked (GlcNAc...) asparagine glycosylation is present at N83. N202 carries an N-linked (GlcNAc...) asparagine glycan. D219 is a binding site for substrate. The active-site Nucleophile is the E221. Substrate contacts are provided by N222, N223, G296, H416, N418, F419, D435, H463, E465, L468, and D488. An ABD region spans residues 336-499; it reads GSLVSGPSFT…SFEIETAFAS (164 aa). C401 and C439 are oxidised to a cystine.

This sequence belongs to the glycosyl hydrolase 54 family.

It localises to the secreted. The enzyme catalyses Hydrolysis of terminal non-reducing alpha-L-arabinofuranoside residues in alpha-L-arabinosides.. Its pathway is glycan metabolism; L-arabinan degradation. In terms of biological role, alpha-L-arabinofuranosidase involved in the degradation of arabinoxylan, a major component of plant hemicellulose. Able to hydrolyze 1,5-, 1,3- and 1,2-alpha-linkages not only in L-arabinofuranosyl oligosaccharides, but also in polysaccharides containing terminal non-reducing L-arabinofuranoses in side chains, like L-arabinan, arabinogalactan and arabinoxylan. The sequence is that of Probable alpha-L-arabinofuranosidase B (abfB) from Aspergillus awamori (Black koji mold).